The following is a 426-amino-acid chain: Glutamate-1-semialdehyde 2,1-aminomutase (426 aa).

Residue Lys-265 is modified to N6-(pyridoxal phosphate)lysine.

Belongs to the class-III pyridoxal-phosphate-dependent aminotransferase family. HemL subfamily. In terms of assembly, homodimer. Pyridoxal 5'-phosphate is required as a cofactor.

The protein resides in the cytoplasm. The enzyme catalyses (S)-4-amino-5-oxopentanoate = 5-aminolevulinate. The protein operates within porphyrin-containing compound metabolism; protoporphyrin-IX biosynthesis; 5-aminolevulinate from L-glutamyl-tRNA(Glu): step 2/2. This is Glutamate-1-semialdehyde 2,1-aminomutase from Neisseria gonorrhoeae (strain NCCP11945).